The chain runs to 136 residues: Large ribosomal subunit protein uL22 (136 aa).

It belongs to the universal ribosomal protein uL22 family. Part of the 50S ribosomal subunit.

Its function is as follows. This protein binds specifically to 23S rRNA; its binding is stimulated by other ribosomal proteins, e.g. L4, L17, and L20. It is important during the early stages of 50S assembly. It makes multiple contacts with different domains of the 23S rRNA in the assembled 50S subunit and ribosome. The globular domain of the protein is located near the polypeptide exit tunnel on the outside of the subunit, while an extended beta-hairpin is found that lines the wall of the exit tunnel in the center of the 70S ribosome. This is Large ribosomal subunit protein uL22 from Leifsonia xyli subsp. xyli (strain CTCB07).